A 385-amino-acid chain; its full sequence is Histidinol-phosphate aminotransferase (385 aa).

At Lys235 the chain carries N6-(pyridoxal phosphate)lysine.

This sequence belongs to the class-II pyridoxal-phosphate-dependent aminotransferase family. Histidinol-phosphate aminotransferase subfamily. Homodimer. It depends on pyridoxal 5'-phosphate as a cofactor.

The enzyme catalyses L-histidinol phosphate + 2-oxoglutarate = 3-(imidazol-4-yl)-2-oxopropyl phosphate + L-glutamate. It functions in the pathway amino-acid biosynthesis; L-histidine biosynthesis; L-histidine from 5-phospho-alpha-D-ribose 1-diphosphate: step 7/9. The protein is Histidinol-phosphate aminotransferase of Nocardia farcinica (strain IFM 10152).